A 155-amino-acid polypeptide reads, in one-letter code: 6,7-dimethyl-8-ribityllumazine synthase (155 aa).

5-amino-6-(D-ribitylamino)uracil is bound by residues phenylalanine 24, 58–60 (AFE), and 82–84 (AVI). 87 to 88 (ST) provides a ligand contact to (2S)-2-hydroxy-3-oxobutyl phosphate. Residue histidine 90 is the Proton donor of the active site. Position 115 (phenylalanine 115) interacts with 5-amino-6-(D-ribitylamino)uracil. Arginine 129 is a (2S)-2-hydroxy-3-oxobutyl phosphate binding site.

The protein belongs to the DMRL synthase family.

The enzyme catalyses (2S)-2-hydroxy-3-oxobutyl phosphate + 5-amino-6-(D-ribitylamino)uracil = 6,7-dimethyl-8-(1-D-ribityl)lumazine + phosphate + 2 H2O + H(+). It functions in the pathway cofactor biosynthesis; riboflavin biosynthesis; riboflavin from 2-hydroxy-3-oxobutyl phosphate and 5-amino-6-(D-ribitylamino)uracil: step 1/2. In terms of biological role, catalyzes the formation of 6,7-dimethyl-8-ribityllumazine by condensation of 5-amino-6-(D-ribitylamino)uracil with 3,4-dihydroxy-2-butanone 4-phosphate. This is the penultimate step in the biosynthesis of riboflavin. This Acetivibrio thermocellus (strain ATCC 27405 / DSM 1237 / JCM 9322 / NBRC 103400 / NCIMB 10682 / NRRL B-4536 / VPI 7372) (Clostridium thermocellum) protein is 6,7-dimethyl-8-ribityllumazine synthase.